Here is a 188-residue protein sequence, read N- to C-terminus: Elongation factor P (188 aa).

K34 is subject to N6-(3,6-diaminohexanoyl)-5-hydroxylysine.

This sequence belongs to the elongation factor P family. May be beta-lysylated on the epsilon-amino group of Lys-34 by the combined action of EpmA and EpmB, and then hydroxylated on the C5 position of the same residue by EpmC (if this protein is present). Lysylation is critical for the stimulatory effect of EF-P on peptide-bond formation. The lysylation moiety may extend toward the peptidyltransferase center and stabilize the terminal 3-CCA end of the tRNA. Hydroxylation of the C5 position on Lys-34 may allow additional potential stabilizing hydrogen-bond interactions with the P-tRNA.

It is found in the cytoplasm. It participates in protein biosynthesis; polypeptide chain elongation. Involved in peptide bond synthesis. Alleviates ribosome stalling that occurs when 3 or more consecutive Pro residues or the sequence PPG is present in a protein, possibly by augmenting the peptidyl transferase activity of the ribosome. Modification of Lys-34 is required for alleviation. The sequence is that of Elongation factor P from Histophilus somni (strain 129Pt) (Haemophilus somnus).